The sequence spans 232 residues: H-2 class II histocompatibility antigen, E-S beta chain (232 aa).

Residues 1 to 90 (WFLEYSTSEC…LDKFLVPRRV (90 aa)) are beta-1. Over 1 to 193 (WFLEYSTSEC…KAQSTSAQNK (193 aa)) the chain is Extracellular. 2 disulfide bridges follow: C10–C74 and C112–C168. An N-linked (GlcNAc...) asparagine glycan is attached at N14. Positions 91–193 (EPTVTVYPTK…KAQSTSAQNK (103 aa)) are beta-2. The 91-residue stretch at 92 to 182 (PTVTVYPTKT…PSLTDPVTVE (91 aa)) folds into the Ig-like C1-type domain. A helical membrane pass occupies residues 194–216 (MLSGVGGFVLGLLFLGAGLFIYF). At 217–232 (RNQKGQSGLQPTGLLS) the chain is on the cytoplasmic side.

It belongs to the MHC class II family. Ubiquitinated in immature dendritic cells leading to down-regulation of MHC class II.

The protein resides in the membrane. This chain is H-2 class II histocompatibility antigen, E-S beta chain (H2-Eb1), found in Mus musculus (Mouse).